Consider the following 140-residue polypeptide: Thioredoxin H9 (140 aa).

A lipid anchor (N-myristoyl glycine) is attached at G2. Residue C4 is the site of S-palmitoyl cysteine attachment. At S14 the chain carries Phosphoserine. A Thioredoxin domain is found at 25–129 (VHLITTKESW…PELQKKVTSI (105 aa)). Catalysis depends on nucleophile residues C57 and C60. Residues C57 and C60 are joined by a disulfide bond. S136 bears the Phosphoserine mark.

This sequence belongs to the thioredoxin family. Plant H-type subfamily. Ubiquitous.

It localises to the cell membrane. Its function is as follows. Probable thiol-disulfide oxidoreductase that may play a role in intercellular communication due to its ability to move from cell to cell. This Arabidopsis thaliana (Mouse-ear cress) protein is Thioredoxin H9 (TRX9).